A 404-amino-acid polypeptide reads, in one-letter code: Formate-dependent phosphoribosylglycinamide formyltransferase (404 aa).

Residues 25–26 and E85 contribute to the N(1)-(5-phospho-beta-D-ribosyl)glycinamide site; that span reads EL. ATP contacts are provided by residues R118, K159, 164–169, 199–202, and E207; these read SSGKGQ and EGFI. An ATP-grasp domain is found at 123 to 318; it reads RLAAEELGLP…EFELHARAIL (196 aa). The Mg(2+) site is built by E277 and E289. N(1)-(5-phospho-beta-D-ribosyl)glycinamide-binding positions include D296, K365, and 372–373; that span reads RR. The interval 384–404 is disordered; sequence TDEARSRAKQAAAAVRPVSAK. A compositionally biased stretch (low complexity) spans 392–404; the sequence is KQAAAAVRPVSAK.

It belongs to the PurK/PurT family. Homodimer.

The catalysed reaction is N(1)-(5-phospho-beta-D-ribosyl)glycinamide + formate + ATP = N(2)-formyl-N(1)-(5-phospho-beta-D-ribosyl)glycinamide + ADP + phosphate + H(+). Its pathway is purine metabolism; IMP biosynthesis via de novo pathway; N(2)-formyl-N(1)-(5-phospho-D-ribosyl)glycinamide from N(1)-(5-phospho-D-ribosyl)glycinamide (formate route): step 1/1. Its function is as follows. Involved in the de novo purine biosynthesis. Catalyzes the transfer of formate to 5-phospho-ribosyl-glycinamide (GAR), producing 5-phospho-ribosyl-N-formylglycinamide (FGAR). Formate is provided by PurU via hydrolysis of 10-formyl-tetrahydrofolate. The protein is Formate-dependent phosphoribosylglycinamide formyltransferase of Paraburkholderia xenovorans (strain LB400).